The primary structure comprises 373 residues: Peroxisomal biogenesis factor 3 (373 aa).

Residues 1-15 (MFRSTWNFLKRHKKK) are Cytoplasmic-facing. The targeting to peroxisomes stretch occupies residues 1–45 (MFRSTWNFLKRHKKKCIFLGTVLGGVYILGKYGQKKIREIQEREA). A helical membrane pass occupies residues 16-36 (CIFLGTVLGGVYILGKYGQKK). Topologically, residues 37 to 116 (IREIQEREAA…LKIISFTRSI (80 aa)) are peroxisomal. The chain crosses the membrane as a helical span at residues 117–140 (VAVYSTCMLVVLLRVQLNIIGGYI). The segment at 120 to 136 (YSTCMLVVLLRVQLNII) is interaction with PEX19. The Cytoplasmic segment spans residues 141–373 (YLDNAAVGKN…AFSTPQQLEK (233 aa)).

This sequence belongs to the peroxin-3 family. Interacts with PEX19.

The protein localises to the peroxisome membrane. Its function is as follows. Involved in peroxisome biosynthesis and integrity. Assembles membrane vesicles before the matrix proteins are translocated. As a docking factor for PEX19, is necessary for the import of peroxisomal membrane proteins in the peroxisomes. This Bos taurus (Bovine) protein is Peroxisomal biogenesis factor 3 (PEX3).